We begin with the raw amino-acid sequence, 283 residues long: Polyamine aminopropyltransferase (283 aa).

In terms of domain architecture, PABS spans 5–240 (NTWFTEIHQD…GWWTATMACK (236 aa)). Q33 is an S-methyl-5'-thioadenosine binding site. The spermidine site is built by H64 and D88. S-methyl-5'-thioadenosine is bound by residues D108 and 139–140 (DG). D158 (proton acceptor) is an active-site residue. 158 to 161 (DSTD) contributes to the spermidine binding site. P165 lines the S-methyl-5'-thioadenosine pocket.

The protein belongs to the spermidine/spermine synthase family. In terms of assembly, homodimer or homotetramer.

The protein resides in the cytoplasm. It carries out the reaction S-adenosyl 3-(methylsulfanyl)propylamine + putrescine = S-methyl-5'-thioadenosine + spermidine + H(+). It functions in the pathway amine and polyamine biosynthesis; spermidine biosynthesis; spermidine from putrescine: step 1/1. In terms of biological role, catalyzes the irreversible transfer of a propylamine group from the amino donor S-adenosylmethioninamine (decarboxy-AdoMet) to putrescine (1,4-diaminobutane) to yield spermidine. This Thioalkalivibrio sulfidiphilus (strain HL-EbGR7) protein is Polyamine aminopropyltransferase.